A 288-amino-acid polypeptide reads, in one-letter code: Small ribosomal subunit protein uS3 (288 aa).

Positions 39–107 constitute a KH type-2 domain; it reads VREYLKAKLK…PVAVNIEEVR (69 aa). A disordered region spans residues 209-288; the sequence is GRNDLPAAET…AAAAADGKGE (80 aa). Positions 219–238 are enriched in basic and acidic residues; the sequence is PRPEEERRPRGPRRDGRPGD. Low complexity predominate over residues 277–288; it reads APAAAAADGKGE.

This sequence belongs to the universal ribosomal protein uS3 family. Part of the 30S ribosomal subunit. Forms a tight complex with proteins S10 and S14.

In terms of biological role, binds the lower part of the 30S subunit head. Binds mRNA in the 70S ribosome, positioning it for translation. In Acidovorax sp. (strain JS42), this protein is Small ribosomal subunit protein uS3.